The primary structure comprises 213 residues: 5-methylthioribulose-1-phosphate/5-deoxyribulose-1-phosphate aldolase (213 aa).

The active-site Proton donor/acceptor is Glu73. Residues Glu73, His92, His94, and His155 each contribute to the Co(2+) site.

The protein belongs to the aldolase class II family. Requires Co(2+) as cofactor.

The catalysed reaction is 5-(methylsulfanyl)-D-ribulose 1-phosphate = 2-(methylsulfanyl)acetaldehyde + dihydroxyacetone phosphate. The enzyme catalyses 5-deoxy-D-ribulose 1-phosphate = dihydroxyacetone phosphate + acetaldehyde. The protein operates within amino-acid biosynthesis; L-methionine biosynthesis via salvage pathway. Uses 5-methylthioribulose-1-phosphate to yield 2-(methylthio)acetaldehyde and dihydroxyacetone phosphate. Can also use 5-deoxyribulose 1-phosphate to yield acetaldehyde and dihydroxyacetone phosphate. Part of a bifunctional DHAP-shunt salvage pathway for SAM by-products. This is 5-methylthioribulose-1-phosphate/5-deoxyribulose-1-phosphate aldolase from Escherichia coli O45:K1 (strain S88 / ExPEC).